Reading from the N-terminus, the 129-residue chain is Histone H2B.2 (129 aa).

Positions 1–19 (MAPKAEKKPASKAPAEKKP) are enriched in basic and acidic residues. The segment at 1 to 38 (MAPKAEKKPASKAPAEKKPAAKKTATSGTKKRSKTRKE) is disordered. N6-acetyllysine; alternate is present on residues Lys7 and Lys8. Residues Lys7 and Lys8 each participate in a glycyl lysine isopeptide (Lys-Gly) (interchain with G-Cter in SUMO); alternate cross-link. A Phosphoserine modification is found at Ser11. An N6-acetyllysine modification is found at Lys12. N6-acetyllysine; alternate is present on Lys17. Lys17 is covalently cross-linked (Glycyl lysine isopeptide (Lys-Gly) (interchain with G-Cter in SUMO); alternate). Residue Lys18 forms a Glycyl lysine isopeptide (Lys-Gly) (interchain with G-Cter in SUMO) linkage. Lys123 participates in a covalent cross-link: Glycyl lysine isopeptide (Lys-Gly) (interchain with G-Cter in ubiquitin).

It belongs to the histone H2B family. The nucleosome is a histone octamer containing two molecules each of H2A, H2B, H3 and H4 assembled in one H3-H4 heterotetramer and two H2A-H2B heterodimers. The octamer wraps approximately 147 bp of DNA. In terms of processing, monoubiquitinated by the UBC2-BRE1 complex to form H2BK123ub1. H2BK123ub1 gives a specific tag for epigenetic transcriptional activation and is also prerequisite for H3K4me and H3K79me formation. H2BK123ub1 also modulates the formation of double-strand breaks during meiosis and is a prerequisite for DNA-damage checkpoint activation. Phosphorylated by STE20 to form H2BS10ph during progression through meiotic prophase. May be correlated with chromosome condensation. Post-translationally, acetylated by GCN5 to form H2BK11ac and H2BK16ac. H2BK16ac can also be formed by ESA1. Acetylation of N-terminal lysines and particularly formation of H2BK11acK16ac has a positive effect on transcription. In terms of processing, sumoylation to form H2BK6su or H2BK7su, and probably also H2BK16su or H2BK17su, occurs preferentially near the telomeres and represses gene transcription.

Its subcellular location is the nucleus. It localises to the chromosome. In terms of biological role, core component of nucleosome. Nucleosomes wrap and compact DNA into chromatin, limiting DNA accessibility to the cellular machineries which require DNA as a template. Histones thereby play a central role in transcription regulation, DNA repair, DNA replication and chromosomal stability. DNA accessibility is regulated via a complex set of post-translational modifications of histones, also called histone code, and nucleosome remodeling. In Debaryomyces hansenii (strain ATCC 36239 / CBS 767 / BCRC 21394 / JCM 1990 / NBRC 0083 / IGC 2968) (Yeast), this protein is Histone H2B.2 (HTB2).